Reading from the N-terminus, the 253-residue chain is Vitamin B12 import ATP-binding protein BtuD (253 aa).

One can recognise an ABC transporter domain in the interval 3-237 (LDAKNLAMPP…EQLESTFATQ (235 aa)). 31–38 (GPNGSGKS) lines the ATP pocket.

It belongs to the ABC transporter superfamily. Vitamin B12 importer (TC 3.A.1.13.1) family. The complex is composed of two ATP-binding proteins (BtuD), two transmembrane proteins (BtuC) and a solute-binding protein (BtuF).

The protein localises to the cell inner membrane. The catalysed reaction is an R-cob(III)alamin(out) + ATP + H2O = an R-cob(III)alamin(in) + ADP + phosphate + H(+). In terms of biological role, part of the ABC transporter complex BtuCDF involved in vitamin B12 import. Responsible for energy coupling to the transport system. In Photobacterium profundum (strain SS9), this protein is Vitamin B12 import ATP-binding protein BtuD.